Reading from the N-terminus, the 72-residue chain is Conotoxin Gla(2)-TxVI/A (72 aa).

An N-terminal signal peptide occupies residues 1-19 (MQKLIILLLVAAVLMSTQA). A propeptide spanning residues 20 to 44 (LFQEKRPMKKIDFLSKGKTDAEKQQ) is cleaved from the precursor. Intrachain disulfides connect Cys-48–Cys-62, Cys-55–Cys-66, and Cys-61–Cys-70. Glu-56 carries the 4-carboxyglutamate modification. 4-hydroxyproline is present on Pro-58. At Ser-71 the chain carries Serine amide.

The protein belongs to the conotoxin O2 superfamily. In terms of processing, brominated at one of the Trp residues. In terms of tissue distribution, expressed by the venom duct.

The protein resides in the secreted. The polypeptide is Conotoxin Gla(2)-TxVI/A (Conus textile (Cloth-of-gold cone)).